Here is a 226-residue protein sequence, read N- to C-terminus: Leucyl/phenylalanyl-tRNA--protein transferase (226 aa).

Belongs to the L/F-transferase family.

It localises to the cytoplasm. The catalysed reaction is N-terminal L-lysyl-[protein] + L-leucyl-tRNA(Leu) = N-terminal L-leucyl-L-lysyl-[protein] + tRNA(Leu) + H(+). The enzyme catalyses N-terminal L-arginyl-[protein] + L-leucyl-tRNA(Leu) = N-terminal L-leucyl-L-arginyl-[protein] + tRNA(Leu) + H(+). It carries out the reaction L-phenylalanyl-tRNA(Phe) + an N-terminal L-alpha-aminoacyl-[protein] = an N-terminal L-phenylalanyl-L-alpha-aminoacyl-[protein] + tRNA(Phe). Functionally, functions in the N-end rule pathway of protein degradation where it conjugates Leu, Phe and, less efficiently, Met from aminoacyl-tRNAs to the N-termini of proteins containing an N-terminal arginine or lysine. The sequence is that of Leucyl/phenylalanyl-tRNA--protein transferase from Pseudomonas putida (strain W619).